The chain runs to 418 residues: S-adenosylmethionine synthase (418 aa).

An ATP-binding site is contributed by His-16. Asp-18 is a Mg(2+) binding site. Glu-44 is a K(+) binding site. The L-methionine site is built by Glu-57 and Gln-100. The segment at 100–110 is flexible loop; that stretch reads QSPDIAQGVDS. ATP is bound by residues 174-176, Asp-259, 265-266, Ala-282, and Lys-286; these read DGK and RK. Asp-259 lines the L-methionine pocket. Lys-290 lines the L-methionine pocket.

It belongs to the AdoMet synthase family. In terms of assembly, homotetramer; dimer of dimers. It depends on Mg(2+) as a cofactor. The cofactor is K(+).

It localises to the cytoplasm. The catalysed reaction is L-methionine + ATP + H2O = S-adenosyl-L-methionine + phosphate + diphosphate. Its pathway is amino-acid biosynthesis; S-adenosyl-L-methionine biosynthesis; S-adenosyl-L-methionine from L-methionine: step 1/1. Functionally, catalyzes the formation of S-adenosylmethionine (AdoMet) from methionine and ATP. The overall synthetic reaction is composed of two sequential steps, AdoMet formation and the subsequent tripolyphosphate hydrolysis which occurs prior to release of AdoMet from the enzyme. The protein is S-adenosylmethionine synthase of Acaryochloris marina (strain MBIC 11017).